The sequence spans 772 residues: Delta-like protein A (772 aa).

Positions 1-20 (MGRHLLLLLFSILYMLLCQA) are cleaved as a signal peptide. The Extracellular portion of the chain corresponds to 21-536 (SSSGVFELKL…SQIASDVPWT (516 aa)). Residues 179 to 223 (FVCDEHYYGEGCSVFCRPRDDAFGHFTCGERGEIICDAGWKGQYC) enclose the DSL domain. 26 disulfides stabilise this stretch: cysteine 181-cysteine 190, cysteine 194-cysteine 206, cysteine 214-cysteine 223, cysteine 228-cysteine 239, cysteine 232-cysteine 245, cysteine 259-cysteine 270, cysteine 265-cysteine 276, cysteine 278-cysteine 287, cysteine 294-cysteine 306, cysteine 300-cysteine 316, cysteine 318-cysteine 327, cysteine 334-cysteine 345, cysteine 339-cysteine 354, cysteine 356-cysteine 365, cysteine 372-cysteine 383, cysteine 377-cysteine 393, cysteine 395-cysteine 404, cysteine 411-cysteine 422, cysteine 416-cysteine 431, cysteine 433-cysteine 442, cysteine 449-cysteine 460, cysteine 454-cysteine 469, cysteine 471-cysteine 480, cysteine 487-cysteine 498, cysteine 492-cysteine 507, and cysteine 509-cysteine 518. EGF-like domains follow at residues 225–257 (EPIC…RYCD), 257–288 (DECI…LFCN), and 290–328 (DLNY…ASCE). The 37-residue stretch at 330 to 366 (EVNECTGNPCRNGGSCTDMENTYSCTCPPGFYGKNCE) folds into the EGF-like 4; calcium-binding domain. 4 EGF-like domains span residues 368-405 (SAMT…FNCE), 407-443 (KIDH…MNCD), 445-481 (AGDE…RNCS), and 483-519 (PVSR…RNCQ). Asparagine 479 is a glycosylation site (N-linked (GlcNAc...) asparagine). A helical membrane pass occupies residues 537-557 (AVGSGVLLVLLLVVACAVVVV). At 558–772 (CVRSKVQQRR…KDECVIATEV (215 aa)) the chain is on the cytoplasmic side. Residues 688 to 722 (EEKRRKRLKSDASEKSKYSESRYSESKYSESKYSE) are disordered. Residues 696–722 (KSDASEKSKYSESRYSESKYSESKYSE) are compositionally biased toward basic and acidic residues.

Interacts with mib. Ubiquitinated by mib, leading to its endocytosis and subsequent degradation. Ubiquitinated by the ECS(ASB11) complex, leading to its degradation by the proteasome. Expressed in nervous system. In the developing nervous system, it is expressed in overlapping regions with deltaB (dlb) and deltaD (dld); in the neural plate, dla is expressed in patches of contiguous cells with dld, while dlb is confined to scattered cells within those patches that will differentiate as neurons. In 24 hours embryos, expressed in the hindbrain in stripes adjacent to rhombomere boundaries, but not in the actual boundary cells. During gastrulation and tail formation, expressed in embryonic midline cells. Expressed in hair cells of inner ear.

Its subcellular location is the membrane. Acts as a ligand for Notch receptors and is involved in primary neurogenesis. Can activate Notch receptors, thereby playing a key role in lateral inhibition, a process that prevents the immediate neighbors of each nascent neural cell from simultaneously embarking on neural differentiation. Required for boundary formation during segmentation of the hindbrain. Required for midline cell fate specification prior to germ layer formation; regulates specification of floorplate, notochord and hypochord. In inner ear, it prevents adjacent cells from adopting the same cell fate. Plays a role in angiogenesis. This is Delta-like protein A (dla) from Danio rerio (Zebrafish).